The following is a 368-amino-acid chain: Putative F-box/kelch-repeat protein At5g02995 (368 aa).

Residues 35 to 84 enclose the F-box domain; it reads SLYWNDPTEDCVWNCLARISRFHYPTLSLVSKGFRSLIASPELEATRSFI. Kelch repeat units lie at residues 140 to 186 and 187 to 233; these read DIYI…IVDK and KIYV…VSGG.

The protein is Putative F-box/kelch-repeat protein At5g02995 of Arabidopsis thaliana (Mouse-ear cress).